Consider the following 891-residue polypeptide: Alanine--tRNA ligase (891 aa).

The Zn(2+) site is built by histidine 564, histidine 568, cysteine 678, and histidine 682.

It belongs to the class-II aminoacyl-tRNA synthetase family. Zn(2+) is required as a cofactor.

Its subcellular location is the cytoplasm. It catalyses the reaction tRNA(Ala) + L-alanine + ATP = L-alanyl-tRNA(Ala) + AMP + diphosphate. Functionally, catalyzes the attachment of alanine to tRNA(Ala) in a two-step reaction: alanine is first activated by ATP to form Ala-AMP and then transferred to the acceptor end of tRNA(Ala). Also edits incorrectly charged Ser-tRNA(Ala) and Gly-tRNA(Ala) via its editing domain. This is Alanine--tRNA ligase from Nitrobacter winogradskyi (strain ATCC 25391 / DSM 10237 / CIP 104748 / NCIMB 11846 / Nb-255).